A 227-amino-acid chain; its full sequence is Cytidylate kinase (227 aa).

10–18 serves as a coordination point for ATP; it reads GPASSGKST.

Belongs to the cytidylate kinase family. Type 1 subfamily.

The protein localises to the cytoplasm. The catalysed reaction is CMP + ATP = CDP + ADP. The enzyme catalyses dCMP + ATP = dCDP + ADP. The sequence is that of Cytidylate kinase from Streptococcus agalactiae serotype III (strain NEM316).